An 84-amino-acid chain; its full sequence is RNA-binding protein SAHV_0542 (84 aa).

The protein belongs to the eukaryotic ribosomal protein eL8 family.

This is RNA-binding protein SAHV_0542 from Staphylococcus aureus (strain Mu3 / ATCC 700698).